We begin with the raw amino-acid sequence, 146 residues long: [Ribosomal protein bS18]-alanine N-acetyltransferase (146 aa).

In terms of domain architecture, N-acetyltransferase spans 2–146; it reads SIISQIEACD…ENAVVMACYL (145 aa). 69 to 71 provides a ligand contact to acetyl-CoA; it reads IAI. The Proton acceptor role is filled by Glu-103. Asn-108 provides a ligand contact to acetyl-CoA. The active-site Proton donor is the Tyr-114.

The protein belongs to the acetyltransferase family. RimI subfamily.

It localises to the cytoplasm. It catalyses the reaction N-terminal L-alanyl-[ribosomal protein bS18] + acetyl-CoA = N-terminal N(alpha)-acetyl-L-alanyl-[ribosomal protein bS18] + CoA + H(+). Acetylates the N-terminal alanine of ribosomal protein bS18. In Haemophilus influenzae (strain ATCC 51907 / DSM 11121 / KW20 / Rd), this protein is [Ribosomal protein bS18]-alanine N-acetyltransferase.